The chain runs to 537 residues: Probable metalloreductase AIM14 (537 aa).

The next 7 helical transmembrane spans lie at 20–40 (GFFIFALTIIQTIFFLQVKFI), 58–78 (ITNPPIWLMVTVWLLIVIFTG), 95–112 (RYGRMAYCLIPLNIYLVL), 133–155 (KWTSRIIVFCSTIHAAGYVYKWI), 167–187 (FLNLLGVVVFVFLVVLAIISI), 194–216 (VYSTFYLIHNVTAWSMVILITFH), and 221–238 (VTVFAVISLILLGYQLYL). Residues 97–213 (GRMAYCLIPL…VTAWSMVILI (117 aa)) form the Ferric oxidoreductase domain. The FAD-binding FR-type domain occupies 187-363 (IRPFRRKVYS…GGSGISLGLP (177 aa)). The disordered stretch occupies residues 432 to 475 (EEQGHGLLNNDNENGIELQNMPKTNEESSEANSTNSKNNKDNQE).

This sequence belongs to the ferric reductase (FRE) family. AIM14 subfamily.

It is found in the membrane. Its function is as follows. Probable cell surface metalloreductase. May be involved in iron or copper homeostasis. In Candida dubliniensis (strain CD36 / ATCC MYA-646 / CBS 7987 / NCPF 3949 / NRRL Y-17841) (Yeast), this protein is Probable metalloreductase AIM14 (AIM14).